A 290-amino-acid chain; its full sequence is MKGRTITLIAGPTASGKSALALQIAQEKNALIINTDSMQVYDVLNILTARPTRTDTATVPHYLYGYVNPALHYSVGQWLCDVSKLLMTFTSKSLIFVGGTGLYFRALLEGISKIPDIPDVVRQKWRLRLDKEGAENLYRQLWQVDAVLAEKISSQDGQRIVRALEVYDATDKKLSWWQKKKTTPLIARNCSEKLLLIPPRQLLYERIHKRLDSMIEKGALEEVIAMKKLALSPLLPAMKAIGIPEFIAYLDGKQSFEEALEMVKTQTRRYAKRQITWFRNQFDEEWMLLS.

ATP is bound at residue 11 to 18; that stretch reads GPTASGKS. Residue 13-18 participates in substrate binding; that stretch reads TASGKS. Interaction with substrate tRNA regions lie at residues 36-39 and 158-162; these read DSMQ and QRIVR.

The protein belongs to the IPP transferase family. In terms of assembly, monomer. Mg(2+) serves as cofactor.

It catalyses the reaction adenosine(37) in tRNA + dimethylallyl diphosphate = N(6)-dimethylallyladenosine(37) in tRNA + diphosphate. In terms of biological role, catalyzes the transfer of a dimethylallyl group onto the adenine at position 37 in tRNAs that read codons beginning with uridine, leading to the formation of N6-(dimethylallyl)adenosine (i(6)A). The sequence is that of tRNA dimethylallyltransferase from Bartonella henselae (strain ATCC 49882 / DSM 28221 / CCUG 30454 / Houston 1) (Rochalimaea henselae).